A 1076-amino-acid chain; its full sequence is DNA-directed RNA polymerase subunit beta (1076 aa).

The protein belongs to the RNA polymerase beta chain family. In terms of assembly, in plastids the minimal PEP RNA polymerase catalytic core is composed of four subunits: alpha, beta, beta', and beta''. When a (nuclear-encoded) sigma factor is associated with the core the holoenzyme is formed, which can initiate transcription.

The protein resides in the plastid. The catalysed reaction is RNA(n) + a ribonucleoside 5'-triphosphate = RNA(n+1) + diphosphate. Its function is as follows. DNA-dependent RNA polymerase catalyzes the transcription of DNA into RNA using the four ribonucleoside triphosphates as substrates. This chain is DNA-directed RNA polymerase subunit beta, found in Euglena longa (Euglenophycean alga).